The sequence spans 700 residues: MARKTPIERYRNIGISAHIDAGKTTTTERILFYTGVNHKIGEVHDGAATMDWMEQEQERGITITSAATTAFWKGMAGDRAEHRINIIDTPGHVDFTIEVERSMRVLDGACMVYCAVGGVQPQSETVWRQANKYKVPRLAFINKMDRTGANFFKVYDQLKLRLKANPVPVVVPIGAEENFTGVVDLLKMKAIIWDEASQGTKFSYEEIPAELVDSCNEWREKMVEAAAESSEDLMNKYLEEGELTEAEIVKGLRDRTIACEIQPMLCGTAFKNKGVQRMLDAVLDFLPSPIDIPPVTGELENGEKGERRAADDEKFSALAFKIMTDPFVGQLIFFRVYSGVVNSGDTVLNATKDKKERLGRILQMHANQREEIKEVRAGDIAAAVGLKDATTGDTLCDPQSPIVLERMIFPEPVISQAVEPKTKPDQEKMGLALNRLAQEDPSFRVQTDEESGQTIISGMGELHLEILVDRMKREFGVEATVGKPQVAYRETIRGKAEDVDGKFVKQSGGRGQYGHAVITLEPNEQGKGYEFLDEIKGGVIPREYIPAVDKGIQETLKAGVLAGFPVVDVKVHLTFGSYHDVDSNENAFRMAGSMAFKEAMRKAQPVILEPMMAVEVETPEDYMGNVMGDLSGRRGIVQGMDDMVGGGKIVRAEVPLSEMFGYSTSLRSLTQGRATYTMEFKHYSEAPRNVSEAIINAKSK.

Residues 8–290 (ERYRNIGISA…AVLDFLPSPI (283 aa)) form the tr-type G domain. Residues 17-24 (AHIDAGKT), 88-92 (DTPGH), and 142-145 (NKMD) contribute to the GTP site.

It belongs to the TRAFAC class translation factor GTPase superfamily. Classic translation factor GTPase family. EF-G/EF-2 subfamily.

The protein resides in the cytoplasm. Functionally, catalyzes the GTP-dependent ribosomal translocation step during translation elongation. During this step, the ribosome changes from the pre-translocational (PRE) to the post-translocational (POST) state as the newly formed A-site-bound peptidyl-tRNA and P-site-bound deacylated tRNA move to the P and E sites, respectively. Catalyzes the coordinated movement of the two tRNA molecules, the mRNA and conformational changes in the ribosome. The sequence is that of Elongation factor G 2 from Paraburkholderia xenovorans (strain LB400).